The chain runs to 270 residues: Tetraspanin-18 (270 aa).

At 1–15 (MRRNCCHVSFASTLK) the chain is on the cytoplasmic side. The helical transmembrane segment at 16 to 36 (ILNFVQAFIGVSIIIYSIWML) threads the bilayer. The Extracellular segment spans residues 37 to 99 (HEYSRHLPVD…LRSLDLPAPW (63 aa)). Residues 100–120 (FIYSFMAVGILVCIVTFIGFI) traverse the membrane as a helical segment. Residues 121 to 132 (AAEAINGCCLCF) are Cytoplasmic-facing. The chain crosses the membrane as a helical span at residues 133-153 (YSILKTLLILLEAALVAYIAI). Topologically, residues 154 to 183 (DRHWEKDLPYDPTGELSSLRAFIEENIDIC) are extracellular. The chain crosses the membrane as a helical span at residues 184–204 (KWVGIAVVAVQLLSLLLAMVL). The Cytoplasmic segment spans residues 205–270 (RAMVSTPKPE…NQSPPVNPKG (66 aa)). The tract at residues 212-249 (KPELDEEEDDENPRSRTWDPLLGPQGNQAPAGSSKIEN) is disordered. Residues 236–249 (QGNQAPAGSSKIEN) are compositionally biased toward polar residues. Ser-245 carries the phosphoserine modification.

Belongs to the tetraspanin (TM4SF) family. Homodimer. Constituent of tobamovirus replication complex. As to expression, expressed in rosette leaves.

Its subcellular location is the membrane. The protein resides in the vacuole membrane. May be involved in the regulation of cell differentiation. In terms of biological role, promotes intracellular multiplication of tobamoviruses, probably being a component of the replication complex. This Arabidopsis thaliana (Mouse-ear cress) protein is Tetraspanin-18 (TOM2AH2).